A 490-amino-acid chain; its full sequence is Betaine aldehyde dehydrogenase (490 aa).

Residues threonine 26, isoleucine 27, and aspartate 93 each coordinate K(+). 150 to 152 (GAW) lines the NAD(+) pocket. Lysine 162 (charge relay system) is an active-site residue. 176–179 (KPSE) serves as a coordination point for NAD(+). K(+) is bound at residue valine 180. Position 230–233 (230–233 (GVAS)) interacts with NAD(+). A K(+)-binding site is contributed by leucine 246. The active-site Proton acceptor is the glutamate 252. The NAD(+) site is built by glycine 254, cysteine 286, and glutamate 387. Cysteine 286 acts as the Nucleophile in catalysis. A Cysteine sulfenic acid (-SOH) modification is found at cysteine 286. Residues lysine 457 and glycine 460 each contribute to the K(+) site. The active-site Charge relay system is the glutamate 464.

Belongs to the aldehyde dehydrogenase family. Dimer of dimers. The cofactor is K(+).

It catalyses the reaction betaine aldehyde + NAD(+) + H2O = glycine betaine + NADH + 2 H(+). Its pathway is amine and polyamine biosynthesis; betaine biosynthesis via choline pathway; betaine from betaine aldehyde: step 1/1. Its function is as follows. Involved in the biosynthesis of the osmoprotectant glycine betaine. Catalyzes the irreversible oxidation of betaine aldehyde to the corresponding acid. The polypeptide is Betaine aldehyde dehydrogenase (Escherichia coli (strain ATCC 8739 / DSM 1576 / NBRC 3972 / NCIMB 8545 / WDCM 00012 / Crooks)).